The following is a 78-amino-acid chain: Surfactant-associated protein 2 (78 aa).

A signal peptide spans 1–19 (MGSGLPLVLLLTLLGSSHG). N-linked (GlcNAc...) asparagine glycosylation is present at asparagine 37.

In terms of processing, N-glycosylated. Predominantly expressed in lung, where it is detected in type II pneumocytes in the alveolus, and in nonciliated epithelium in bronchioli (at protein level). Also detected at lower levels in cervix, esophagus, stomach, testis and kidney.

It is found in the secreted. It localises to the cytoplasmic vesicle. The protein localises to the secretory vesicle. Its subcellular location is the golgi apparatus. Its function is as follows. Putative surfactant protein. This is Surfactant-associated protein 2 (SFTA2) from Homo sapiens (Human).